Reading from the N-terminus, the 157-residue chain is Large ribosomal subunit protein bL34c (157 aa).

A chloroplast-targeting transit peptide spans 1 to 97 (MASLSTSVVA…GQRRRGLVVR (97 aa)).

Belongs to the bacterial ribosomal protein bL34 family. Part of the 50S ribosomal subunit.

The protein localises to the plastid. The protein resides in the chloroplast. Functionally, this protein binds directly to 23S ribosomal RNA. This Arabidopsis thaliana (Mouse-ear cress) protein is Large ribosomal subunit protein bL34c (RPL34).